The primary structure comprises 239 residues: MPAQEGPPPYCFSTPLRRGVLRSRYRRFFAEVELENGQPVTAHCPNTGPMTGVCQVGAPVYLSYHPDPKRKLAYTWEMIQVEGVWVGINTGLPNRLVEWGLARGWFPQLAEFSRWQREVTCGRSKIDFLLMGDSGLAYLEVKNTTWAVGSRALFPDTVTTRGQKHLEDLIEIRRQGQRALLLYWINRADCTEFAPGEERDPRYAHLFRQALQAGVEVLPYRIAVSPQGIRPLGLAKIVA.

Belongs to the SfsA family.

This is Sugar fermentation stimulation protein homolog from Synechococcus sp. (strain JA-3-3Ab) (Cyanobacteria bacterium Yellowstone A-Prime).